The chain runs to 464 residues: Glutamate--tRNA ligase (464 aa).

The 'HIGH' region signature appears at 9–19; the sequence is PSPTGYLHIGG. The 'KMSKS' region motif lies at 242-246; the sequence is KISKR. ATP is bound at residue K245.

Belongs to the class-I aminoacyl-tRNA synthetase family. Glutamate--tRNA ligase type 1 subfamily. In terms of assembly, monomer.

It is found in the cytoplasm. The enzyme catalyses tRNA(Glu) + L-glutamate + ATP = L-glutamyl-tRNA(Glu) + AMP + diphosphate. Functionally, catalyzes the attachment of glutamate to tRNA(Glu) in a two-step reaction: glutamate is first activated by ATP to form Glu-AMP and then transferred to the acceptor end of tRNA(Glu). The polypeptide is Glutamate--tRNA ligase (Neisseria gonorrhoeae (strain ATCC 700825 / FA 1090)).